Reading from the N-terminus, the 223-residue chain is Endonuclease V (223 aa).

Mg(2+) is bound by residues Asp35 and Asp103.

The protein belongs to the endonuclease V family. Mg(2+) serves as cofactor.

It localises to the cytoplasm. It catalyses the reaction Endonucleolytic cleavage at apurinic or apyrimidinic sites to products with a 5'-phosphate.. Functionally, DNA repair enzyme involved in the repair of deaminated bases. Selectively cleaves double-stranded DNA at the second phosphodiester bond 3' to a deoxyinosine leaving behind the intact lesion on the nicked DNA. This is Endonuclease V from Salmonella schwarzengrund (strain CVM19633).